The following is a 756-amino-acid chain: Cholesterol uptake protein 1 (756 aa).

Positions 1 to 18 (MRTSQAIFILIFLDSVRN) are cleaved as a signal peptide. Over 19–268 (QSPQVIPAKW…TIESSMKIFD (250 aa)) the chain is Extracellular. N-linked (GlcNAc...) asparagine glycans are attached at residues Asn-39 and Asn-63. The short motif at 124–129 (VHYNFR) is the Cholesterol-binding sequence motif element. 3 N-linked (GlcNAc...) asparagine glycosylation sites follow: Asn-140, Asn-174, and Asn-257. A helical membrane pass occupies residues 269-289 (YTIPIVFWACILLLVTIVVFV). At 290–373 (YHYFDGIWER…YEERELKYDV (84 aa)) the chain is on the cytoplasmic side. Residues 374 to 394 (YKIALAIIGIFYNITVLQLII) form a helical membrane-spanning segment. The Extracellular portion of the chain corresponds to 395–421 (SKAGSLRQSGDLDECTFNFQCARPLWY). Residues 422-442 (FVAFNNVVSNGGYVYFGTLII) traverse the membrane as a helical segment. Residues 443 to 473 (VMNYCRERSFRRLFAVQPTLAERYGLPQHSG) lie on the Cytoplasmic side of the membrane. The chain crosses the membrane as a helical span at residues 474–494 (LMTAIGLAVIMEGISSATYHV). Over 495 to 498 (CPNN) the chain is Extracellular. The chain crosses the membrane as a helical span at residues 499 to 517 (INYQFDTALMYVIGMLGKL). The Cytoplasmic portion of the chain corresponds to 518-530 (KIWSLRHPDMVVS). The helical transmembrane segment at 531-551 (AYHAFGFLGVFLMAAIAGVYV) threads the bilayer. The Extracellular portion of the chain corresponds to 552-554 (HNM). Residues 555 to 575 (IFWALFSIIYIASMLLVSLEF) traverse the membrane as a helical segment. Positions 570–578 (LVSLEFYFK) match the Cholesterol-binding sequence motif motif. Over 576-612 (YFKGIWTLNLRELRNSIRLSWVSSRHLSCVVPAYKAR) the chain is Cytoplasmic. A helical transmembrane segment spans residues 613 to 633 (FFVILLLNIANTAVVVYGLEA). Residues 634–637 (HPKD) are Extracellular-facing. A helical transmembrane segment spans residues 638 to 658 (FLSFLLIPFIGNLFIYIIYYI). Over 659-671 (LMKMIYREKIPKR) the chain is Cytoplasmic. The helical transmembrane segment at 672–692 (AIALLFAAVISWTCAGILFNQ) threads the bilayer. Residues 693–728 (RVSDWSKMPAISRELNKPCIFLNFYDNHDLWHLSSA) lie on the Extracellular side of the membrane. The helical transmembrane segment at 729 to 749 (FAIFFSFTAINVIDDDLMFVM) threads the bilayer. Topologically, residues 750–756 (RNTIRVF) are cytoplasmic.

It belongs to the SID1 family. As to expression, highly expressed along the intestine with expression also detected in the pharynx, especially at the terminal bulb, and in the excretory gland cells.

Its subcellular location is the cell membrane. It catalyses the reaction cholesterol(in) = cholesterol(out). Cholesterol-binding protein which is involved in dietary cholesterol uptake from the environment. Does not play a role in double-stranded RNA transport in contrast to other SID1 family members. The sequence is that of Cholesterol uptake protein 1 from Caenorhabditis elegans.